A 609-amino-acid polypeptide reads, in one-letter code: UvrABC system protein C (609 aa).

The region spanning Ser-16 to Val-94 is the GIY-YIG domain. The UVR domain maps to Lys-203–Val-238.

Belongs to the UvrC family. In terms of assembly, interacts with UvrB in an incision complex.

The protein resides in the cytoplasm. In terms of biological role, the UvrABC repair system catalyzes the recognition and processing of DNA lesions. UvrC both incises the 5' and 3' sides of the lesion. The N-terminal half is responsible for the 3' incision and the C-terminal half is responsible for the 5' incision. The polypeptide is UvrABC system protein C (Shewanella sp. (strain MR-4)).